The chain runs to 441 residues: ATP-dependent protease ATPase subunit HslU (441 aa).

Residues isoleucine 18 and 60–65 each bind ATP; that span reads GVGKTE. A disordered region spans residues 131–158; the sequence is ILDALLPRPRGSEYDHARDESSTRQTFR. Positions 140–152 are enriched in basic and acidic residues; it reads RGSEYDHARDESS. ATP contacts are provided by aspartate 254, glutamate 320, and arginine 392.

This sequence belongs to the ClpX chaperone family. HslU subfamily. A double ring-shaped homohexamer of HslV is capped on each side by a ring-shaped HslU homohexamer. The assembly of the HslU/HslV complex is dependent on binding of ATP.

Its subcellular location is the cytoplasm. ATPase subunit of a proteasome-like degradation complex; this subunit has chaperone activity. The binding of ATP and its subsequent hydrolysis by HslU are essential for unfolding of protein substrates subsequently hydrolyzed by HslV. HslU recognizes the N-terminal part of its protein substrates and unfolds these before they are guided to HslV for hydrolysis. In Chromohalobacter salexigens (strain ATCC BAA-138 / DSM 3043 / CIP 106854 / NCIMB 13768 / 1H11), this protein is ATP-dependent protease ATPase subunit HslU.